Consider the following 131-residue polypeptide: Profilin-1 (131 aa).

The cysteines at positions 13 and 115 are disulfide-linked. Positions 81 to 97 (RVIRGKKGAGGITIKKT) match the Involved in PIP2 interaction motif. T111 is subject to Phosphothreonine.

It belongs to the profilin family. As to quaternary structure, occurs in many kinds of cells as a complex with monomeric actin in a 1:1 ratio.

It is found in the cytoplasm. The protein resides in the cytoskeleton. Its function is as follows. Binds to actin and affects the structure of the cytoskeleton. At high concentrations, profilin prevents the polymerization of actin, whereas it enhances it at low concentrations. By binding to PIP2, it inhibits the formation of IP3 and DG. The protein is Profilin-1 (PRO1) of Phleum pratense (Common timothy).